The chain runs to 367 residues: Phosphoribosylaminoimidazole-succinocarboxamide synthase (367 aa).

This sequence belongs to the SAICAR synthetase family.

The enzyme catalyses 5-amino-1-(5-phospho-D-ribosyl)imidazole-4-carboxylate + L-aspartate + ATP = (2S)-2-[5-amino-1-(5-phospho-beta-D-ribosyl)imidazole-4-carboxamido]succinate + ADP + phosphate + 2 H(+). It functions in the pathway purine metabolism; IMP biosynthesis via de novo pathway; 5-amino-1-(5-phospho-D-ribosyl)imidazole-4-carboxamide from 5-amino-1-(5-phospho-D-ribosyl)imidazole-4-carboxylate: step 1/2. The protein is Phosphoribosylaminoimidazole-succinocarboxamide synthase of Shewanella sp. (strain W3-18-1).